Reading from the N-terminus, the 196-residue chain is APGW-amide-related neuropeptide (196 aa).

Residues 1–22 (METLNIFLVIFSLLGTIIIASS) form the signal peptide. A propeptide spanning residues 23 to 48 (SDESSERKKRDLDTIDDTNNDFLTAD) is cleaved from the precursor. A Tryptophan amide modification is found at tryptophan 54. Residues 58–68 (SFDDDILNNLD) constitute a propeptide that is removed on maturation. Tryptophan 74 is modified (tryptophan amide). A propeptide spanning residues 78-88 (SDMLFDSEEIE) is cleaved from the precursor. Residue tryptophan 94 is modified to Tryptophan amide. Positions 98–105 (SSSLYDDE) are excised as a propeptide. Tryptophan 111 is subject to Tryptophan amide. Positions 115–129 (SSALLDDLSLYNSIV) are excised as a propeptide. Tryptophan 135 carries the post-translational modification Tryptophan amide. The propeptide occupies 139-146 (SDTFKVDI). Residues tryptophan 151 and tryptophan 158 each carry the tryptophan amide modification. A propeptide spanning residues 162–196 (SGPNMCMDFQDEILQLYKLLNEAEKLHSECEALNI) is cleaved from the precursor.

In terms of tissue distribution, expressed in cerebral, pedal and visceral ganglia. TPGW-amide is found in pedal and cerebral ganglia and in shell adductor muscle (at protein level). RPGW-amide and KPGW-amide are found in pedal retractor muscle, ABRM and shell adductor muscle (at protein level).

Functionally, RPGW-amide, KPGW-amide and TPGW-amide tetrapeptides are involved in control of muscle contraction and may function as neurotransmitters. These peptides increase tension of the pedal retractor muscle and, in conjunction with FMRF-amide, increase peak tension of the anterior byssus retractor muscle (ABRM). In Mytilus edulis (Blue mussel), this protein is APGW-amide-related neuropeptide.